A 593-amino-acid chain; its full sequence is Proline--tRNA ligase (593 aa).

This sequence belongs to the class-II aminoacyl-tRNA synthetase family. ProS type 1 subfamily. As to quaternary structure, homodimer.

The protein resides in the cytoplasm. The catalysed reaction is tRNA(Pro) + L-proline + ATP = L-prolyl-tRNA(Pro) + AMP + diphosphate. Its function is as follows. Catalyzes the attachment of proline to tRNA(Pro) in a two-step reaction: proline is first activated by ATP to form Pro-AMP and then transferred to the acceptor end of tRNA(Pro). As ProRS can inadvertently accommodate and process non-cognate amino acids such as alanine and cysteine, to avoid such errors it has two additional distinct editing activities against alanine. One activity is designated as 'pretransfer' editing and involves the tRNA(Pro)-independent hydrolysis of activated Ala-AMP. The other activity is designated 'posttransfer' editing and involves deacylation of mischarged Ala-tRNA(Pro). The misacylated Cys-tRNA(Pro) is not edited by ProRS. This chain is Proline--tRNA ligase, found in Parasynechococcus marenigrum (strain WH8102).